Reading from the N-terminus, the 258-residue chain is Ribosomal protein L11 methyltransferase (258 aa).

The S-adenosyl-L-methionine site is built by T117, G138, D160, and N201.

This sequence belongs to the methyltransferase superfamily. PrmA family.

It localises to the cytoplasm. It carries out the reaction L-lysyl-[protein] + 3 S-adenosyl-L-methionine = N(6),N(6),N(6)-trimethyl-L-lysyl-[protein] + 3 S-adenosyl-L-homocysteine + 3 H(+). In terms of biological role, methylates ribosomal protein L11. The polypeptide is Ribosomal protein L11 methyltransferase (Thermosipho melanesiensis (strain DSM 12029 / CIP 104789 / BI429)).